The sequence spans 746 residues: Ribosome biogenesis protein BOP1 (746 aa).

The interval 1–116 (MAGSRGAGRT…PCPRTEMASA (116 aa)) is disordered. The span at 43-65 (SHSTGSDSGVSDSEESVFSGLED) shows a compositional bias: low complexity. The span at 66-87 (SGSDSSEDDDEGDEEGEDGALD) shows a compositional bias: acidic residues. Residues 88–99 (DEGHSGIKKTTE) show a composition bias toward basic and acidic residues. Thr106 bears the Phosphothreonine mark. At Tyr122 the chain carries Phosphotyrosine. Phosphoserine is present on residues Ser126 and Ser127. The interval 265–427 (MGWIQPRRPR…CLSVSPGGQW (163 aa)) is sufficient for nucleolar localization. 7 WD repeats span residues 411 to 450 (GHSD…CVRT), 452 to 492 (PVGG…RLVA), 532 to 576 (CHGK…SPFR), 577 to 615 (RSHG…LTKK), 618 to 657 (PNCK…KPYR), 661 to 700 (HHKK…DLLQ), and 716 to 746 (TRDL…RLFT).

It belongs to the WD repeat BOP1/ERB1 family. As to quaternary structure, component of the PeBoW complex, composed of BOP1, PES1 and WDR12. The complex is held together by BOP1, which interacts with PES1 via its N-terminal domain and with WDR12 via a high-affinity interaction between the seven-bladed beta-propeller domains of the 2 proteins. The NOP7 complex associates with the 66S pre-ribosome. The PeBoW complex associates with DDX27, BOP1 interacts directly with DDX27.

The protein localises to the nucleus. It is found in the nucleolus. It localises to the nucleoplasm. Component of the PeBoW complex, which is required for maturation of 28S and 5.8S ribosomal RNAs and formation of the 60S ribosome. The sequence is that of Ribosome biogenesis protein BOP1 from Homo sapiens (Human).